Here is a 910-residue protein sequence, read N- to C-terminus: Lysine-specific demethylase 7 homolog (910 aa).

Polar residues predominate over residues 1–11 (MDGNDINIQKN). 3 disordered regions span residues 1 to 58 (MDGN…HQTP), 103 to 162 (NKMG…GSEP), and 183 to 212 (QEELKLEVDSDSEEDDVPEQKTPKESDRCG). Over residues 25-35 (QHSDHKNHESA) the composition is skewed to basic and acidic residues. Polar residues predominate over residues 43-58 (YTASQPALSSTEHQTP). Basic and acidic residues predominate over residues 118 to 130 (PKSEPKIEPHVTD). Over residues 150-160 (ESNQNYVSNGS) the composition is skewed to polar residues. Positions 200-210 (PEQKTPKESDR) are enriched in basic and acidic residues. A PHD-type zinc finger spans residues 208 to 290 (SDRCGGCGKF…KFFCPKCVPH (83 aa)). One can recognise a JmjC domain in the interval 441–612 (SDNNEMKEIA…MQMRVYHLEN (172 aa)). Residues 505 to 510 (TDFHVD), Y518, K525, and H580 contribute to the substrate site. Positions 508 and 510 each coordinate Fe cation. Residue H580 participates in Fe cation binding. Disordered stretches follow at residues 712-790 (KIQN…PSEV) and 864-910 (EAVH…KLKM). A compositionally biased stretch (basic residues) spans 748–757 (YKKKYTKKAK). Positions 758-780 (KDNDDAPKVKKAKKEEVPEEKVP) are enriched in basic and acidic residues.

This sequence belongs to the JHDM1 histone demethylase family. JHDM1D subfamily. The cofactor is Fe(2+). In terms of tissue distribution, mainly expressed in neurons. Also weakly expressed in some muscle, intestinal and hypodermal cells.

Its subcellular location is the nucleus. Its activity is regulated as follows. Competitively inhibited by 2-hydroxyglutarate. Histone demethylase required for nervous system development. Specifically demethylates dimethylated 'Lys-9', 'Lys-23' and 'Lys-27' (H3K9me2, H3K23me2 and H3K27me2, respectively) of histone H3, thereby playing a central role in histone code. Promotes mitochondrial stress-induced longevity. The protein is Lysine-specific demethylase 7 homolog (jmjd-1.2) of Caenorhabditis elegans.